Here is a 1236-residue protein sequence, read N- to C-terminus: DNA-directed RNA polymerase subunit beta (1236 aa).

Residues 1185–1236 form a disordered region; that stretch reads IEGSEDYTEPKQPNDNYLEEEENKDKESDYDEDLNFDDLTKGLQLDDFNDEH. The segment covering 1201–1220 has biased composition (acidic residues); it reads YLEEEENKDKESDYDEDLNF.

Belongs to the RNA polymerase beta chain family. As to quaternary structure, the RNAP catalytic core consists of 2 alpha, 1 beta, 1 beta' and 1 omega subunit. When a sigma factor is associated with the core the holoenzyme is formed, which can initiate transcription.

It carries out the reaction RNA(n) + a ribonucleoside 5'-triphosphate = RNA(n+1) + diphosphate. In terms of biological role, DNA-dependent RNA polymerase catalyzes the transcription of DNA into RNA using the four ribonucleoside triphosphates as substrates. The protein is DNA-directed RNA polymerase subunit beta of Clostridium tetani (strain Massachusetts / E88).